A 399-amino-acid polypeptide reads, in one-letter code: MAMDIETLLDLEKLYSAIMTYFDNPLTLLIVVATIIIVLIVIVWITKMVIDLAPYAYVNARIRSKEAKLFDDAKLNELIESGSLEELVGLLEDTDYGQYVIEVMNELKDPVAVEKALDMYLADLYGLIYRISPDSAKKVLKVFAKKFDIKNIKTLIRAKFVGLSAEETYALLIPLGNIPVEKLKELAEVKTVEEVVRGLDGTEYFKILQEELSNYDQTSNIIGFELALDKYYLESLRKTIMTEGKEEDIFREFVGTIIDVENLKVILKGKADGLSAEELSKYVTLTGYELADWKLKDLMSAGGIEGVLSGLEGTSYAEVLAEAMEEYEKTKSIYAFEKALDKFVLEKGKKLSTRKPFGVGPIIGLIVSKELEVKNLKAIIKGKIENLKPEEIRSLLISL.

The protein belongs to the V-ATPase V0D/AC39 subunit family. In terms of assembly, the A-type ATPase is composed of subunits A(3), B(3), C, D, E(1 or 2), F, H(2), I and K(x).

Its subcellular location is the cell membrane. In terms of biological role, component of the A-type ATP synthase that produces ATP from ADP in the presence of a proton gradient across the membrane. The polypeptide is A-type ATP synthase subunit C (Methanocaldococcus jannaschii (strain ATCC 43067 / DSM 2661 / JAL-1 / JCM 10045 / NBRC 100440) (Methanococcus jannaschii)).